The chain runs to 477 residues: Probable cytosolic Fe-S cluster assembly factor GG21400 (477 aa).

Residues cysteine 23, cysteine 68, cysteine 71, cysteine 74, cysteine 187, cysteine 243, cysteine 395, and cysteine 399 each coordinate [4Fe-4S] cluster.

It belongs to the NARF family.

Component of the cytosolic iron-sulfur (Fe/S) protein assembly machinery. Required for maturation of extramitochondrial Fe/S proteins. In Drosophila erecta (Fruit fly), this protein is Probable cytosolic Fe-S cluster assembly factor GG21400.